The primary structure comprises 188 residues: Ribosome maturation factor RimM (188 aa).

The region spanning 98-174 is the PRC barrel domain; sequence EGTFYYHDLR…HLTADAPAGL (77 aa). The segment at 169–188 is disordered; that stretch reads DAPAGLIGPEPGEEDGAAES. Positions 179–188 are enriched in acidic residues; sequence PGEEDGAAES.

The protein belongs to the RimM family. Binds ribosomal protein uS19.

The protein resides in the cytoplasm. Functionally, an accessory protein needed during the final step in the assembly of 30S ribosomal subunit, possibly for assembly of the head region. Essential for efficient processing of 16S rRNA. May be needed both before and after RbfA during the maturation of 16S rRNA. It has affinity for free ribosomal 30S subunits but not for 70S ribosomes. This is Ribosome maturation factor RimM from Deinococcus radiodurans (strain ATCC 13939 / DSM 20539 / JCM 16871 / CCUG 27074 / LMG 4051 / NBRC 15346 / NCIMB 9279 / VKM B-1422 / R1).